Reading from the N-terminus, the 352-residue chain is Biotin synthase (352 aa).

A Radical SAM core domain is found at 44-262 (NRVQVSTLLS…LAVARIMMPK (219 aa)). 3 residues coordinate [4Fe-4S] cluster: C59, C63, and C66. Residues C103, C134, C194, and R266 each coordinate [2Fe-2S] cluster.

The protein belongs to the radical SAM superfamily. Biotin synthase family. As to quaternary structure, homodimer. Requires [4Fe-4S] cluster as cofactor. It depends on [2Fe-2S] cluster as a cofactor.

It catalyses the reaction (4R,5S)-dethiobiotin + (sulfur carrier)-SH + 2 reduced [2Fe-2S]-[ferredoxin] + 2 S-adenosyl-L-methionine = (sulfur carrier)-H + biotin + 2 5'-deoxyadenosine + 2 L-methionine + 2 oxidized [2Fe-2S]-[ferredoxin]. It functions in the pathway cofactor biosynthesis; biotin biosynthesis; biotin from 7,8-diaminononanoate: step 2/2. Its function is as follows. Catalyzes the conversion of dethiobiotin (DTB) to biotin by the insertion of a sulfur atom into dethiobiotin via a radical-based mechanism. The protein is Biotin synthase of Ectopseudomonas mendocina (strain ymp) (Pseudomonas mendocina).